The sequence spans 453 residues: Bifunctional protein GlmU (453 aa).

The segment at 1-231 is pyrophosphorylase; it reads MERTCLAIIL…EVEMTGCNNR (231 aa). UDP-N-acetyl-alpha-D-glucosamine is bound by residues 10-13, lysine 24, glutamine 77, 82-83, 105-107, glycine 143, glutamate 157, asparagine 172, and asparagine 229; these read LAAG, GT, and YGD. A Mg(2+)-binding site is contributed by aspartate 107. Asparagine 229 serves as a coordination point for Mg(2+). A linker region spans residues 232–252; the sequence is AELAFIERLWQERRRHELMLS. Positions 253–453 are N-acetyltransferase; that stretch reads GVTMIAPETV…AIKAAKKGSH (201 aa). Residues arginine 318 and lysine 336 each contribute to the UDP-N-acetyl-alpha-D-glucosamine site. Histidine 348 acts as the Proton acceptor in catalysis. 2 residues coordinate UDP-N-acetyl-alpha-D-glucosamine: tyrosine 351 and asparagine 362. Acetyl-CoA is bound by residues alanine 365, 371–372, serine 390, serine 408, and arginine 425; that span reads NY.

The protein in the N-terminal section; belongs to the N-acetylglucosamine-1-phosphate uridyltransferase family. It in the C-terminal section; belongs to the transferase hexapeptide repeat family. As to quaternary structure, homotrimer. Requires Mg(2+) as cofactor.

The protein localises to the cytoplasm. It catalyses the reaction alpha-D-glucosamine 1-phosphate + acetyl-CoA = N-acetyl-alpha-D-glucosamine 1-phosphate + CoA + H(+). It carries out the reaction N-acetyl-alpha-D-glucosamine 1-phosphate + UTP + H(+) = UDP-N-acetyl-alpha-D-glucosamine + diphosphate. Its pathway is nucleotide-sugar biosynthesis; UDP-N-acetyl-alpha-D-glucosamine biosynthesis; N-acetyl-alpha-D-glucosamine 1-phosphate from alpha-D-glucosamine 6-phosphate (route II): step 2/2. The protein operates within nucleotide-sugar biosynthesis; UDP-N-acetyl-alpha-D-glucosamine biosynthesis; UDP-N-acetyl-alpha-D-glucosamine from N-acetyl-alpha-D-glucosamine 1-phosphate: step 1/1. It participates in bacterial outer membrane biogenesis; LPS lipid A biosynthesis. Its function is as follows. Catalyzes the last two sequential reactions in the de novo biosynthetic pathway for UDP-N-acetylglucosamine (UDP-GlcNAc). The C-terminal domain catalyzes the transfer of acetyl group from acetyl coenzyme A to glucosamine-1-phosphate (GlcN-1-P) to produce N-acetylglucosamine-1-phosphate (GlcNAc-1-P), which is converted into UDP-GlcNAc by the transfer of uridine 5-monophosphate (from uridine 5-triphosphate), a reaction catalyzed by the N-terminal domain. The polypeptide is Bifunctional protein GlmU (Rhizobium rhizogenes (strain K84 / ATCC BAA-868) (Agrobacterium radiobacter)).